Here is a 185-residue protein sequence, read N- to C-terminus: Elongation factor P (185 aa).

Belongs to the elongation factor P family.

The protein localises to the cytoplasm. It functions in the pathway protein biosynthesis; polypeptide chain elongation. Functionally, involved in peptide bond synthesis. Stimulates efficient translation and peptide-bond synthesis on native or reconstituted 70S ribosomes in vitro. Probably functions indirectly by altering the affinity of the ribosome for aminoacyl-tRNA, thus increasing their reactivity as acceptors for peptidyl transferase. In Streptococcus pyogenes serotype M49 (strain NZ131), this protein is Elongation factor P.